An 834-amino-acid chain; its full sequence is Translation factor GUF1 homolog, mitochondrial (834 aa).

A mitochondrion-targeting transit peptide spans 1–66; that stretch reads MKLCGVRGSG…RPLLAEPRRY (66 aa). A tr-type G domain is found at 129-314; that stretch reads ACIRNVSVVA…QIIDKVPPPR (186 aa). Residues 138–145, 205–209, and 259–262 contribute to the GTP site; these read AHVDHGKT, DTPGH, and TKMD. The tract at residues 475 to 507 is disordered; sequence ATGPPETASRTKPATAAETASSDDASGSSGSSV. A compositionally biased stretch (low complexity) spans 488–507; that stretch reads ATAAETASSDDASGSSGSSV.

Belongs to the TRAFAC class translation factor GTPase superfamily. Classic translation factor GTPase family. LepA subfamily.

It is found in the mitochondrion inner membrane. The catalysed reaction is GTP + H2O = GDP + phosphate + H(+). Functionally, promotes mitochondrial protein synthesis. May act as a fidelity factor of the translation reaction, by catalyzing a one-codon backward translocation of tRNAs on improperly translocated ribosomes. Binds to mitochondrial ribosomes in a GTP-dependent manner. This chain is Translation factor GUF1 homolog, mitochondrial, found in Leishmania major.